Here is an 872-residue protein sequence, read N- to C-terminus: Leucine--tRNA ligase (872 aa).

The 'HIGH' region signature appears at 56–66 (PYPSGNLHMGH). Residues 629–633 (KMSKS) carry the 'KMSKS' region motif. K632 serves as a coordination point for ATP.

This sequence belongs to the class-I aminoacyl-tRNA synthetase family.

Its subcellular location is the cytoplasm. The enzyme catalyses tRNA(Leu) + L-leucine + ATP = L-leucyl-tRNA(Leu) + AMP + diphosphate. The chain is Leucine--tRNA ligase from Prochlorococcus marinus (strain MIT 9211).